Consider the following 548-residue polypeptide: Protein NRT1/ PTR FAMILY 2.4 (548 aa).

The next 12 membrane-spanning stretches (helical) occupy residues 29–49 (TLLG…VFLI), 65–85 (IVNG…DSFF), 88–108 (IPVI…LTLI), 136–156 (ILYA…FILA), 172–192 (FFNW…TAIV), 200–220 (WKLG…IFVA), 316–336 (LVPL…QMSM), 354–374 (VSAG…IILN), 393–413 (LQKV…SAVV), 429–449 (VLWL…HFPA), 468–488 (SLTS…IDVI), and 508–528 (YLVL…CSWF).

It belongs to the major facilitator superfamily. Proton-dependent oligopeptide transporter (POT/PTR) (TC 2.A.17) family. Strongly expressed in the root stele.

Its subcellular location is the membrane. Transporter involved in a passive nitrate efflux. This is Protein NRT1/ PTR FAMILY 2.4 (NPF2.4) from Arabidopsis thaliana (Mouse-ear cress).